We begin with the raw amino-acid sequence, 461 residues long: Cysteine--tRNA ligase (461 aa).

Cys28 lines the Zn(2+) pocket. Positions 30-40 match the 'HIGH' region motif; that stretch reads ITVYDLCHIGH. Zn(2+)-binding residues include Cys209, His234, and Glu238. The short motif at 266–270 is the 'KMSKS' region element; the sequence is KMSKS. Lys269 contributes to the ATP binding site.

The protein belongs to the class-I aminoacyl-tRNA synthetase family. As to quaternary structure, monomer. Zn(2+) is required as a cofactor.

The protein localises to the cytoplasm. It carries out the reaction tRNA(Cys) + L-cysteine + ATP = L-cysteinyl-tRNA(Cys) + AMP + diphosphate. This chain is Cysteine--tRNA ligase, found in Escherichia coli O127:H6 (strain E2348/69 / EPEC).